The sequence spans 157 residues: NudC domain-containing protein 2 (157 aa).

An N-acetylserine modification is found at Ser-2. The region spanning 14-104 is the CS domain; it reads CGTPWGQWYQ…DAANCWTSLL (91 aa). The disordered stretch occupies residues 134-157; the sequence is FDFSGAEISGNYTKGGPDFSNLEK. Ser-142 bears the Phosphoserine mark. Position 145 is a phosphotyrosine (Tyr-145).

As to quaternary structure, interacts with LIS1.

It localises to the chromosome. It is found in the centromere. The protein resides in the kinetochore. Its subcellular location is the cytoplasm. The protein localises to the cytoskeleton. It localises to the microtubule organizing center. It is found in the centrosome. The protein resides in the spindle pole. Its function is as follows. May regulate the LIS1/dynein pathway by stabilizing LIS1 with Hsp90 chaperone. The sequence is that of NudC domain-containing protein 2 (Nudcd2) from Mus musculus (Mouse).